Reading from the N-terminus, the 595-residue chain is Beta-(1--&gt;2)glucan export ATP-binding/permease protein NdvA (595 aa).

The region spanning 21–301 is the ABC transmembrane type-1 domain; the sequence is SLLICSANVM…MSNFINLTIS (281 aa). Transmembrane regions (helical) follow at residues 22–42, 55–75, 129–149, 152–172, and 248–268; these read LLICSANVMLAIITIAEPILF, IIPTLTIWVCFGISHILAYVL, IWLDFMRQHLSTLVALFVLIP, FNMNWRLSIVLVVLAIIYVLI, and MASTISIVCVLLLGAFFVAKG. Residues 335-569 form the ABC transporter domain; the sequence is IQFHHVTYKF…GGRFYKLLKA (235 aa). 368–375 is a binding site for ATP; that stretch reads GPTGAGKT.

It belongs to the ABC transporter superfamily. Beta-(1--&gt;2)glucan exporter (TC 3.A.1.108.1) family. As to quaternary structure, homodimer.

It localises to the cell inner membrane. It catalyses the reaction [(1-&gt;2)-beta-D-glucosyl](n)(in) + ATP + H2O = [(1-&gt;2)-beta-D-glucosyl](n)(out) + ADP + phosphate + H(+). Its function is as follows. Involved in beta-(1--&gt;2)glucan export. Transmembrane domains (TMD) form a pore in the inner membrane and the ATP-binding domain (NBD) is responsible for energy generation. The polypeptide is Beta-(1--&gt;2)glucan export ATP-binding/permease protein NdvA (Bartonella henselae (strain ATCC 49882 / DSM 28221 / CCUG 30454 / Houston 1) (Rochalimaea henselae)).